We begin with the raw amino-acid sequence, 388 residues long: Mannitol-1-phosphate 5-dehydrogenase (388 aa).

5 to 16 is a binding site for NAD(+); the sequence is AIQFGGGNIGRG. The active site involves lysine 213.

Belongs to the mannitol dehydrogenase family. Monomer.

The enzyme catalyses D-mannitol 1-phosphate + NAD(+) = beta-D-fructose 6-phosphate + NADH + H(+). Functionally, catalyzes the NAD(H)-dependent interconversion of D-fructose 6-phosphate and D-mannitol 1-phosphate in the mannitol metabolic pathway. This Aspergillus clavatus (strain ATCC 1007 / CBS 513.65 / DSM 816 / NCTC 3887 / NRRL 1 / QM 1276 / 107) protein is Mannitol-1-phosphate 5-dehydrogenase (mpdA).